The primary structure comprises 212 residues: Transmembrane protein 186 (212 aa).

The Mitochondrial matrix portion of the chain corresponds to 1-78; that stretch reads MAAVLRAVAR…YLSRLKVAQT (78 aa). A helical membrane pass occupies residues 79-99; sequence ALTVAALPPGLYCYSQGLMPF. Residues 100–101 lie on the Mitochondrial intermembrane side of the membrane; it reads SS. A helical membrane pass occupies residues 102–122; sequence LCLAGGVAGFALAMLCWMSHF. Residues 123-212 are Mitochondrial matrix-facing; sequence FRRLVGILYV…QVFGVLDALK (90 aa).

The protein belongs to the TMEM186 family. As to quaternary structure, part of the mitochondrial complex I assembly/MCIA complex that comprises at least the core subunits TMEM126B, NDUFAF1, ECSIT and ACAD9 and complement subunits such as COA1 and TMEM186. Interacts with MT-ND3.

The protein localises to the mitochondrion inner membrane. In terms of biological role, as part of the MCIA complex, required for efficient assembly of the mitochondrial complex I. This Bos taurus (Bovine) protein is Transmembrane protein 186.